The following is a 953-amino-acid chain: Isoleucine--tRNA ligase (953 aa).

The 'HIGH' region motif lies at 57-67 (PYANGDIHIGH). L-isoleucyl-5'-AMP is bound at residue glutamate 582. The 'KMSKS' region motif lies at 623-627 (KMSKS). ATP is bound at residue lysine 626. Zn(2+) is bound by residues cysteine 916, cysteine 919, cysteine 936, and cysteine 939.

This sequence belongs to the class-I aminoacyl-tRNA synthetase family. IleS type 1 subfamily. As to quaternary structure, monomer. It depends on Zn(2+) as a cofactor.

It is found in the cytoplasm. It carries out the reaction tRNA(Ile) + L-isoleucine + ATP = L-isoleucyl-tRNA(Ile) + AMP + diphosphate. Catalyzes the attachment of isoleucine to tRNA(Ile). As IleRS can inadvertently accommodate and process structurally similar amino acids such as valine, to avoid such errors it has two additional distinct tRNA(Ile)-dependent editing activities. One activity is designated as 'pretransfer' editing and involves the hydrolysis of activated Val-AMP. The other activity is designated 'posttransfer' editing and involves deacylation of mischarged Val-tRNA(Ile). In Bordetella parapertussis (strain 12822 / ATCC BAA-587 / NCTC 13253), this protein is Isoleucine--tRNA ligase.